Reading from the N-terminus, the 239-residue chain is Ribonuclease Le2 (239 aa).

5 disulfides stabilise this stretch: C5-C22, C13-C58, C21-C126, C66-C118, and C191-C225. Residues H51, E111, and H115 contribute to the active site.

The protein belongs to the RNase T2 family.

It catalyses the reaction a ribonucleotidyl-ribonucleotide-RNA + H2O = a 3'-end 3'-phospho-ribonucleotide-RNA + a 5'-end dephospho-ribonucleoside-RNA + H(+). Its function is as follows. This is a base non-specific and adenylic acid preferential ribonuclease. In Lentinula edodes (Shiitake mushroom), this protein is Ribonuclease Le2.